Reading from the N-terminus, the 192-residue chain is Fe/S biogenesis protein NfuA (192 aa).

[4Fe-4S] cluster is bound by residues Cys149 and Cys152.

It belongs to the NfuA family. Homodimer. It depends on [4Fe-4S] cluster as a cofactor.

In terms of biological role, involved in iron-sulfur cluster biogenesis. Binds a 4Fe-4S cluster, can transfer this cluster to apoproteins, and thereby intervenes in the maturation of Fe/S proteins. Could also act as a scaffold/chaperone for damaged Fe/S proteins. In Colwellia psychrerythraea (strain 34H / ATCC BAA-681) (Vibrio psychroerythus), this protein is Fe/S biogenesis protein NfuA.